Reading from the N-terminus, the 275-residue chain is NAD kinase (275 aa).

Catalysis depends on Asp-53, which acts as the Proton acceptor. Residues Asp-53–Gly-54, Asn-129–Glu-130, Arg-155, Asp-157, and Thr-168–Ser-173 contribute to the NAD(+) site.

The protein belongs to the NAD kinase family. A divalent metal cation is required as a cofactor.

The protein resides in the cytoplasm. The catalysed reaction is NAD(+) + ATP = ADP + NADP(+) + H(+). Involved in the regulation of the intracellular balance of NAD and NADP, and is a key enzyme in the biosynthesis of NADP. Catalyzes specifically the phosphorylation on 2'-hydroxyl of the adenosine moiety of NAD to yield NADP. The polypeptide is NAD kinase (Streptococcus agalactiae serotype Ia (strain ATCC 27591 / A909 / CDC SS700)).